Reading from the N-terminus, the 135-residue chain is Protein PsiE homolog (135 aa).

4 helical membrane-spanning segments follow: residues 14–34 (LQTI…IFLV), 54–74 (YQLI…ALIV), 82–102 (HFPL…LIIV), and 107–127 (PSDT…LYLA).

It belongs to the PsiE family.

It localises to the cell inner membrane. The chain is Protein PsiE homolog from Pectobacterium carotovorum subsp. carotovorum (strain PC1).